We begin with the raw amino-acid sequence, 327 residues long: Melanoma-associated antigen B18 (327 aa).

The segment covering Met-1–Arg-19 has biased composition (basic residues). Residues Met-1–Asp-85 form a disordered region. Over residues Met-46 to Gln-70 the composition is skewed to polar residues. One can recognise an MAGE domain in the interval Ile-91–Ala-289.

In terms of assembly, interacts with LNX1. Expressed in testis, stomach, large intestine, small intestine, spleen, lymph node, bone marrow lymphocytes and blood T-lymphocytes. Not detected in brain, heart, lung, liver or kidney (at protein level).

Its subcellular location is the cytoplasm. Functionally, may enhance ubiquitin ligase activity of RING-type zinc finger-containing E3 ubiquitin-protein ligases. Proposed to act through recruitment and/or stabilization of the Ubl-conjugating enzyme (E2) at the E3:substrate complex. The protein is Melanoma-associated antigen B18 of Mus musculus (Mouse).